Here is a 552-residue protein sequence, read N- to C-terminus: MATPNSGRAASVYSEVQSSRIEHVLPLPSVLNHPFKIVQGPPSSAAGNPDEIAKLFPNLFGQPSAMLVPDVADSLDSNQQLKIGLVLSGGQAPGGHNVISGIFDYLQDRAKGSILYGFRGGPAGIMKCNYVQLTADYIHPYRNQGGFDMICSGRDKIETPEQFKQAEETAGKLDLNGLVVIGGDDSNTNACLLAENFRSKNLKTRVIGCPKTIDGDLKCKEVPTSFGFDTACKIYSEMIGNVMIDARSTGKYYHFVRLMGRAASHITLECALQTHPNITIIGEEVAAKKLALKDVTDYIVDVICKRADLGYNYGVILIPEGLIDFIPEVQNLIAELNEILAHDVVDEGGLWKKKLTSQSLQLFEFLPVAIQEQLMLERDPHGNVQVAKIETEKMLIQMVETELEKRKQQGTYKAHFKGQSHFFGYEGRCGLPTNFDSTYCYALGYAAGALLHSGKTGLISSVGNLGAPVAEWTVGGTALTSLMDVERRHGKFKPVIKKAMVELEGAPFKKFASLREEWALKNRYVSPGPIQFMGPGSDAASHTLLLELGSVA.

Position 90 (glycine 90) interacts with diphosphate. Aspartate 184 is a Mg(2+) binding site. Residues 212 to 214 (TID), 251 to 252 (KY), 259 to 261 (MGR), glutamate 320, and 425 to 428 (YEGR) each bind substrate. Aspartate 214 functions as the Proton acceptor in the catalytic mechanism.

Belongs to the phosphofructokinase type A (PFKA) family. PPi-dependent PFK group II subfamily. Clade 'Long' sub-subfamily. In terms of assembly, tetramer of two alpha (regulatory) and two beta (catalytic) chains. It depends on Mg(2+) as a cofactor.

Its subcellular location is the cytoplasm. It carries out the reaction beta-D-fructose 6-phosphate + diphosphate = beta-D-fructose 1,6-bisphosphate + phosphate + H(+). It participates in carbohydrate degradation; glycolysis; D-glyceraldehyde 3-phosphate and glycerone phosphate from D-glucose: step 3/4. Allosterically activated by fructose 2,6-bisphosphate. In terms of biological role, catalytic subunit of pyrophosphate--fructose 6-phosphate 1-phosphotransferase. Catalyzes the phosphorylation of D-fructose 6-phosphate, the first committing step of glycolysis. Uses inorganic phosphate (PPi) as phosphoryl donor instead of ATP like common ATP-dependent phosphofructokinases (ATP-PFKs), which renders the reaction reversible, and can thus function both in glycolysis and gluconeogenesis. The chain is Pyrophosphate--fructose 6-phosphate 1-phosphotransferase subunit beta from Ricinus communis (Castor bean).